We begin with the raw amino-acid sequence, 411 residues long: Tyrosine--tRNA ligase (411 aa).

Position 34 (tyrosine 34) interacts with L-tyrosine. Residues 39–48 (CTATSLHIGS) carry the 'HIGH' region motif. The L-tyrosine site is built by tyrosine 171 and glutamine 175. Positions 231-235 (KMGKT) match the 'KMSKS' region motif. Lysine 234 serves as a coordination point for ATP. One can recognise an S4 RNA-binding domain in the interval 345-411 (ISAYELFHEA…GKKRHILVRV (67 aa)).

Belongs to the class-I aminoacyl-tRNA synthetase family. TyrS type 1 subfamily. As to quaternary structure, homodimer.

It is found in the cytoplasm. The enzyme catalyses tRNA(Tyr) + L-tyrosine + ATP = L-tyrosyl-tRNA(Tyr) + AMP + diphosphate + H(+). Catalyzes the attachment of tyrosine to tRNA(Tyr) in a two-step reaction: tyrosine is first activated by ATP to form Tyr-AMP and then transferred to the acceptor end of tRNA(Tyr). This Rickettsia africae (strain ESF-5) protein is Tyrosine--tRNA ligase.